The sequence spans 947 residues: Serine-aspartate repeat-containing protein C (947 aa).

The first 50 residues, 1-50 (MNNKKTATNRKGMIPNRLNKFSIRKYSVGTASILVGTTLIFGLSGHEAKA), serve as a signal peptide directing secretion. The interval 51–164 (AEHTNGELNQ…STTPKTTTIK (114 aa)) is disordered. A ligand binding A region region spans residues 51–495 (AEHTNGELNQ…GSSTANGDQK (445 aa)). Residues 56-71 (GELNQSKNETTAPSEN) show a composition bias toward polar residues. A compositionally biased stretch (basic and acidic residues) spans 72–83 (KTTKKVDSRQLK). Positions 84–155 (DNTQTATADQ…SNLTQAKDVS (72 aa)) are enriched in polar residues. CNA-B domains follow at residues 496-606 (KYNL…YKTP) and 607-717 (KYSL…EEET). Residues 678–927 (TQTGTNTTED…NNSNNGTLFG (250 aa)) form a disordered region. Acidic residues-rich tracts occupy residues 685-695 (TEDDKDADGGE) and 712-886 (YYEE…DSDS). The LPXTG sorting signal signature appears at 910 to 914 (LPETG). Residues 912–927 (ETGSENNNSNNGTLFG) are compositionally biased toward low complexity. Residue Thr913 is modified to Pentaglycyl murein peptidoglycan amidated threonine. Residues 914–947 (GSENNNSNNGTLFGGLFAALGSLLLFGRRKKQNK) constitute a propeptide, removed by sortase.

Belongs to the serine-aspartate repeat-containing protein (SDr) family. Homodimerizes; via N2-Domain. Interacts with host NRXN1; this interaction mediates bacterial attachment to host cells.

It is found in the secreted. The protein localises to the cell wall. Cell surface-associated calcium-binding protein which plays an important role in adhesion and pathogenesis. Mediates interactions with components of the extracellular matrix such as host NRXN1 to promote bacterial adhesion. The polypeptide is Serine-aspartate repeat-containing protein C (sdrC) (Staphylococcus aureus (strain COL)).